Here is a 198-residue protein sequence, read N- to C-terminus: Recombination protein RecR (198 aa).

A C4-type zinc finger spans residues 57-72 (CSVCGRLTDDDPCIIC). The 96-residue stretch at 80–175 (TKILVVEDSK…KVTRLARGLA (96 aa)) folds into the Toprim domain.

Belongs to the RecR family.

In terms of biological role, may play a role in DNA repair. It seems to be involved in an RecBC-independent recombinational process of DNA repair. It may act with RecF and RecO. The sequence is that of Recombination protein RecR from Streptococcus thermophilus (strain CNRZ 1066).